Reading from the N-terminus, the 653-residue chain is ATP-dependent zinc metalloprotease FtsH 1 (653 aa).

The Cytoplasmic segment spans residues 1-8 (MAENKWLR). The helical transmembrane segment at 9–29 (NGFVWIVLIIAVVALWVTFMK) threads the bilayer. The Extracellular portion of the chain corresponds to 30–110 (DGGSAREENF…RVNPASQWGN (81 aa)). Residues 111–131 (WLSALTFILPTLFLIGIVIFM) form a helical membrane-spanning segment. Topologically, residues 132 to 653 (MRQAQGTNNQ…SPTMRPQPAS (522 aa)) are cytoplasmic. An ATP-binding site is contributed by 203-210 (GPPGTGKT). His425 serves as a coordination point for Zn(2+). The active site involves Glu426. The Zn(2+) site is built by His429 and Asp501. Residues 604 to 653 (EPRPRPQLVGPPVTRPAALAHKTEEADRGGERSPHPQPHPSPTMRPQPAS) are disordered. Positions 624–637 (HKTEEADRGGERSP) are enriched in basic and acidic residues. Residues 638-653 (HPQPHPSPTMRPQPAS) show a composition bias toward pro residues.

It in the central section; belongs to the AAA ATPase family. The protein in the C-terminal section; belongs to the peptidase M41 family. In terms of assembly, homohexamer. Requires Zn(2+) as cofactor.

The protein resides in the cell membrane. Acts as a processive, ATP-dependent zinc metallopeptidase for both cytoplasmic and membrane proteins. Plays a role in the quality control of integral membrane proteins. This is ATP-dependent zinc metalloprotease FtsH 1 from Sphaerobacter thermophilus (strain ATCC 49802 / DSM 20745 / KCCM 41009 / NCIMB 13125 / S 6022).